The primary structure comprises 311 residues: Methionyl-tRNA formyltransferase (311 aa).

114-117 (SLLP) contributes to the (6S)-5,6,7,8-tetrahydrofolate binding site.

The protein belongs to the Fmt family.

The enzyme catalyses L-methionyl-tRNA(fMet) + (6R)-10-formyltetrahydrofolate = N-formyl-L-methionyl-tRNA(fMet) + (6S)-5,6,7,8-tetrahydrofolate + H(+). In terms of biological role, attaches a formyl group to the free amino group of methionyl-tRNA(fMet). The formyl group appears to play a dual role in the initiator identity of N-formylmethionyl-tRNA by promoting its recognition by IF2 and preventing the misappropriation of this tRNA by the elongation apparatus. In Corynebacterium diphtheriae (strain ATCC 700971 / NCTC 13129 / Biotype gravis), this protein is Methionyl-tRNA formyltransferase.